The following is a 532-amino-acid chain: Exodeoxyribonuclease 7 large subunit (532 aa).

The interval 497-532 (AITTGEGTPAPETAAAPKKKPAKPASSDPGNQGNLF) is disordered. Residues 499–512 (TTGEGTPAPETAAA) are compositionally biased toward low complexity.

Belongs to the XseA family. Heterooligomer composed of large and small subunits.

It is found in the cytoplasm. The catalysed reaction is Exonucleolytic cleavage in either 5'- to 3'- or 3'- to 5'-direction to yield nucleoside 5'-phosphates.. In terms of biological role, bidirectionally degrades single-stranded DNA into large acid-insoluble oligonucleotides, which are then degraded further into small acid-soluble oligonucleotides. This Agrobacterium fabrum (strain C58 / ATCC 33970) (Agrobacterium tumefaciens (strain C58)) protein is Exodeoxyribonuclease 7 large subunit.